Here is a 491-residue protein sequence, read N- to C-terminus: Probable cytosol aminopeptidase (491 aa).

Lys-264 and Asp-269 together coordinate Mn(2+). Lys-276 is an active-site residue. The Mn(2+) site is built by Asp-287, Asp-346, and Glu-348. The active site involves Arg-350.

The protein belongs to the peptidase M17 family. It depends on Mn(2+) as a cofactor.

Its subcellular location is the cytoplasm. It carries out the reaction Release of an N-terminal amino acid, Xaa-|-Yaa-, in which Xaa is preferably Leu, but may be other amino acids including Pro although not Arg or Lys, and Yaa may be Pro. Amino acid amides and methyl esters are also readily hydrolyzed, but rates on arylamides are exceedingly low.. It catalyses the reaction Release of an N-terminal amino acid, preferentially leucine, but not glutamic or aspartic acids.. Functionally, presumably involved in the processing and regular turnover of intracellular proteins. Catalyzes the removal of unsubstituted N-terminal amino acids from various peptides. The protein is Probable cytosol aminopeptidase of Xylella fastidiosa (strain M12).